We begin with the raw amino-acid sequence, 185 residues long: Ribosome-recycling factor (185 aa).

Residues 139-159 (IDSLEKDGDVSGDEADRAKKK) are disordered. Residues 141 to 159 (SLEKDGDVSGDEADRAKKK) are compositionally biased toward basic and acidic residues.

Belongs to the RRF family.

The protein resides in the cytoplasm. In terms of biological role, responsible for the release of ribosomes from messenger RNA at the termination of protein biosynthesis. May increase the efficiency of translation by recycling ribosomes from one round of translation to another. The protein is Ribosome-recycling factor of Sorangium cellulosum (strain So ce56) (Polyangium cellulosum (strain So ce56)).